Consider the following 308-residue polypeptide: Methionine synthase (308 aa).

4 residues coordinate Zn(2+): His-201, Cys-203, Glu-224, and Cys-285.

Belongs to the archaeal MetE family. Requires Zn(2+) as cofactor.

It participates in amino-acid biosynthesis; L-methionine biosynthesis via de novo pathway. Its function is as follows. Catalyzes the transfer of a methyl group to L-homocysteine resulting in methionine formation. Can use methylcobalamin and methylcobinamide as methyl donors, but methylcobalamin is not considered to be the physiological substrate. This chain is Methionine synthase, found in Methanothermobacter thermautotrophicus (strain ATCC 29096 / DSM 1053 / JCM 10044 / NBRC 100330 / Delta H) (Methanobacterium thermoautotrophicum).